The chain runs to 84 residues: Small ribosomal subunit protein uS17 (84 aa).

It belongs to the universal ribosomal protein uS17 family. Part of the 30S ribosomal subunit.

Functionally, one of the primary rRNA binding proteins, it binds specifically to the 5'-end of 16S ribosomal RNA. This Clostridium beijerinckii (strain ATCC 51743 / NCIMB 8052) (Clostridium acetobutylicum) protein is Small ribosomal subunit protein uS17.